The primary structure comprises 150 residues: MRALIQRVLRGRVTVEGSEVGAIGPGLVVLVGAGQGDGEADARYVAEKIAHLRIFEDEQGKMNRSVSDVGGEVLVVSQFTLYGDCRKGRRPSFTQAAPPDEARRLVEAVVAELRKFGLTVATGQFQAHMVVEIINDGPVTLMVEGRGGES.

A Gly-cisPro motif, important for rejection of L-amino acids motif is present at residues 137 to 138; sequence GP.

This sequence belongs to the DTD family. As to quaternary structure, homodimer.

It localises to the cytoplasm. The enzyme catalyses glycyl-tRNA(Ala) + H2O = tRNA(Ala) + glycine + H(+). It carries out the reaction a D-aminoacyl-tRNA + H2O = a tRNA + a D-alpha-amino acid + H(+). In terms of biological role, an aminoacyl-tRNA editing enzyme that deacylates mischarged D-aminoacyl-tRNAs. Also deacylates mischarged glycyl-tRNA(Ala), protecting cells against glycine mischarging by AlaRS. Acts via tRNA-based rather than protein-based catalysis; rejects L-amino acids rather than detecting D-amino acids in the active site. By recycling D-aminoacyl-tRNA to D-amino acids and free tRNA molecules, this enzyme counteracts the toxicity associated with the formation of D-aminoacyl-tRNA entities in vivo and helps enforce protein L-homochirality. The protein is D-aminoacyl-tRNA deacylase of Heliobacterium modesticaldum (strain ATCC 51547 / Ice1).